A 140-amino-acid polypeptide reads, in one-letter code: Putative ABC transporter permease protein ORF1 (140 aa).

The ABC transmembrane type-1 domain occupies 1 to 133; sequence DPNVAFYSVV…ITTAGIFAYF (133 aa). 3 consecutive transmembrane segments (helical) span residues 9–29, 65–85, and 115–135; these read VVAV…IAAL, TACI…YVMT, and TIAS…YFVT.

It belongs to the binding-protein-dependent transport system permease family. MalFG subfamily.

It is found in the cell membrane. Its function is as follows. May play a role in sugar transport. This is Putative ABC transporter permease protein ORF1 from Caldicellulosiruptor sp. (strain Rt8B.4).